Reading from the N-terminus, the 313-residue chain is Tyrosine--tRNA ligase (313 aa).

Y32 lines the L-tyrosine pocket. The 'HIGH' region signature appears at P37–H45. Positions 152, 156, 159, and 174 each coordinate L-tyrosine. A 'KMSKS' region motif is present at residues K208–S212. S211 contacts ATP.

The protein belongs to the class-I aminoacyl-tRNA synthetase family. TyrS type 3 subfamily. As to quaternary structure, homodimer.

It is found in the cytoplasm. The catalysed reaction is tRNA(Tyr) + L-tyrosine + ATP = L-tyrosyl-tRNA(Tyr) + AMP + diphosphate + H(+). In terms of biological role, catalyzes the attachment of tyrosine to tRNA(Tyr) in a two-step reaction: tyrosine is first activated by ATP to form Tyr-AMP and then transferred to the acceptor end of tRNA(Tyr). This chain is Tyrosine--tRNA ligase, found in Methanospirillum hungatei JF-1 (strain ATCC 27890 / DSM 864 / NBRC 100397 / JF-1).